Consider the following 84-residue polypeptide: Small ribosomal subunit protein bS16 (84 aa).

This sequence belongs to the bacterial ribosomal protein bS16 family.

This Cupriavidus pinatubonensis (strain JMP 134 / LMG 1197) (Cupriavidus necator (strain JMP 134)) protein is Small ribosomal subunit protein bS16.